The chain runs to 394 residues: Probable peptidoglycan glycosyltransferase FtsW (394 aa).

Residues 1–26 lie on the Cytoplasmic side of the membrane; the sequence is MNTMRPRHLNQRGKPVSRPISLYDKW. Residues 27–47 form a helical membrane-spanning segment; the sequence is LIGAVFGLLIIGLMMVASSSV. Topologically, residues 48–57 are periplasmic; the sequence is MISTKYFHQP. A helical transmembrane segment spans residues 58–78; that stretch reads FHFLIRQACYLFVGLLLALIV. Residues 79–88 are Cytoplasmic-facing; the sequence is VRTDSSFWEK. The helical transmembrane segment at 89-109 threads the bilayer; sequence ISMPMMIGCVFLLLIVLIPGI. The Periplasmic portion of the chain corresponds to 110 to 118; that stretch reads GKSVNGSRR. Residues 119–139 form a helical membrane-spanning segment; sequence WLALGPIGVQVSELTKLAMIF. Topologically, residues 140–154 are cytoplasmic; sequence YLSGYLVRQQEAVCE. A helical transmembrane segment spans residues 155-175; it reads SIFGFIKPMAILAVVSVLLLL. The Periplasmic segment spans residues 176–177; sequence EP. The helical transmembrane segment at 178–198 threads the bilayer; sequence DFGATVVISGTVMAMLFLAGV. Residues 199-201 lie on the Cytoplasmic side of the membrane; sequence KLR. The chain crosses the membrane as a helical span at residues 202 to 222; the sequence is YYFGLMLVVVTALALLAVSSP. At 223-278 the chain is on the periplasmic side; it reads YRVARLTAFLDPWADQYNSGYQLTQSLIAFGRGGWFGTGLGESIQKLLYLPEAHTD. A helical membrane pass occupies residues 279 to 299; that stretch reads FLFAVIAEELGLFGILVVITL. The Cytoplasmic portion of the chain corresponds to 300 to 327; sequence YSILVIRGLNIGYTAYTQERHFASYTAY. A helical membrane pass occupies residues 328–348; sequence GLTIWLALQASINMGVNAGLL. At 349–354 the chain is on the periplasmic side; that stretch reads PTKGLT. Residues 355–375 form a helical membrane-spanning segment; that stretch reads LPLLSYGGASMVINCIVIALL. Residues 376-394 are Cytoplasmic-facing; it reads LRIDHENRWQSLGLRPLTA.

The protein belongs to the SEDS family. FtsW subfamily.

It is found in the cell inner membrane. It catalyses the reaction [GlcNAc-(1-&gt;4)-Mur2Ac(oyl-L-Ala-gamma-D-Glu-L-Lys-D-Ala-D-Ala)](n)-di-trans,octa-cis-undecaprenyl diphosphate + beta-D-GlcNAc-(1-&gt;4)-Mur2Ac(oyl-L-Ala-gamma-D-Glu-L-Lys-D-Ala-D-Ala)-di-trans,octa-cis-undecaprenyl diphosphate = [GlcNAc-(1-&gt;4)-Mur2Ac(oyl-L-Ala-gamma-D-Glu-L-Lys-D-Ala-D-Ala)](n+1)-di-trans,octa-cis-undecaprenyl diphosphate + di-trans,octa-cis-undecaprenyl diphosphate + H(+). The protein operates within cell wall biogenesis; peptidoglycan biosynthesis. Its function is as follows. Peptidoglycan polymerase that is essential for cell division. This is Probable peptidoglycan glycosyltransferase FtsW from Legionella pneumophila subsp. pneumophila (strain Philadelphia 1 / ATCC 33152 / DSM 7513).